A 673-amino-acid chain; its full sequence is DNA ligase (673 aa).

Residues Asp33–Asp37, Ser83–Leu84, and Glu117 each bind NAD(+). Lys119 (N6-AMP-lysine intermediate) is an active-site residue. Residues Arg140, Glu175, Lys282, and Lys306 each coordinate NAD(+). Cys400, Cys403, Cys418, and Cys424 together coordinate Zn(2+). Residues Arg592 to Ser673 form the BRCT domain.

This sequence belongs to the NAD-dependent DNA ligase family. LigA subfamily. Requires Mg(2+) as cofactor. It depends on Mn(2+) as a cofactor.

The enzyme catalyses NAD(+) + (deoxyribonucleotide)n-3'-hydroxyl + 5'-phospho-(deoxyribonucleotide)m = (deoxyribonucleotide)n+m + AMP + beta-nicotinamide D-nucleotide.. Its function is as follows. DNA ligase that catalyzes the formation of phosphodiester linkages between 5'-phosphoryl and 3'-hydroxyl groups in double-stranded DNA using NAD as a coenzyme and as the energy source for the reaction. It is essential for DNA replication and repair of damaged DNA. The polypeptide is DNA ligase (Anaplasma marginale (strain St. Maries)).